Consider the following 62-residue polypeptide: Venom protein 51.1 (62 aa).

An N-terminal signal peptide occupies residues 1-25; the sequence is MKFFGILLIVTMVVLVMIATTYVES. 3 disulfide bridges follow: cysteine 32/cysteine 53, cysteine 39/cysteine 58, and cysteine 43/cysteine 60.

In terms of tissue distribution, expressed by the venom gland.

The protein resides in the secreted. In terms of biological role, neurotoxin. Decreases the action potential of myelinated nerves in mice and frogs. In Lychas mucronatus (Chinese swimming scorpion), this protein is Venom protein 51.1.